We begin with the raw amino-acid sequence, 402 residues long: MAKSKDEIKEEIAKAIINQVSKTDLSRRRALSTLAKGGIIAGVLAAFGAGFGSGYVTAPKGSSSSGVAPPQPGFMYGQVPEHPTWKIVFINHVTTNPFFVPTQYGIQDACLLLDCNYQWTGSETSDTTTMVNDMEAAISQGANGIAVSVISPNAFDKPTQDALNAGIPVFAYNAYIPTDDPSYSQYHNPPYLGYIGQSLYASGQLFGQRILNLVPSGSRVALFIATPGTANIQPRIDGIQSVIEGHYTIDVVATGALVSDEQSAIESYFNSHPDVKGMFAVDAGSTQGVGNVLREHGIKTVSNGGTIAAGGYDLLPATIQNIVDGYLDFTIDQQPYLQGFLPTLAIYLYLISDTLVYPLNIDTGSKFITNSNIQPYLLASRYEGSSTAYKPTSTTSSSSSSG.

A helical membrane pass occupies residues 38 to 58 (GIIAGVLAAFGAGFGSGYVTA).

This sequence belongs to the bacterial solute-binding protein 2 family. In terms of assembly, the complex is composed of two ATP-binding proteins (XylG), two transmembrane proteins (XylH) and a solute-binding protein (XylF).

The protein resides in the cell membrane. Part of the ABC transporter complex XylFGH involved in the uptake of xylose and arabinose. The chain is Xylose/arabinose-binding protein XylF from Sulfolobus acidocaldarius (strain ATCC 33909 / DSM 639 / JCM 8929 / NBRC 15157 / NCIMB 11770).